A 627-amino-acid polypeptide reads, in one-letter code: UvrABC system protein C (627 aa).

The GIY-YIG domain maps to 26-105 (PEPGVYFMRD…IKQHQPYFNV (80 aa)). The 36-residue stretch at 215–250 (QELIDILSEQMEKAAEALNFEVAARIRDQIAGLKSL) folds into the UVR domain.

The protein belongs to the UvrC family. In terms of assembly, interacts with UvrB in an incision complex.

It is found in the cytoplasm. Functionally, the UvrABC repair system catalyzes the recognition and processing of DNA lesions. UvrC both incises the 5' and 3' sides of the lesion. The N-terminal half is responsible for the 3' incision and the C-terminal half is responsible for the 5' incision. The protein is UvrABC system protein C of Trichormus variabilis (strain ATCC 29413 / PCC 7937) (Anabaena variabilis).